Here is a 778-residue protein sequence, read N- to C-terminus: DNA repair protein crb2 (778 aa).

Residues 35–56 (KVNASINPSPPRSNDNSNKEFS) form a disordered region. Position 73 is a phosphothreonine; by ATM (Thr73). Ser80 carries the post-translational modification Phosphoserine; by ATM. Positions 141–245 (VSNSSQILSP…PPAFLPETSE (105 aa)) are interaction with rad4. A Phosphothreonine modification is found at Thr187. The residue at position 215 (Thr215) is a Phosphothreonine; by cdc2. Thr235 is subject to Phosphothreonine. Residues 358–493 (SRRSFKNRVL…RRFQGRDLSF (136 aa)) form a tudor-like region. The tract at residues 370 to 404 (FKGYPSFYYPATLVAPVHSAVTSSIMYKVQFDDAT) is interaction with dimethylated histone H4. The 119-residue stretch at 535–653 (SNQLIFDDCV…RVVDFSPYLL (119 aa)) folds into the BRCT domain.

Homodimer. Dimerization is mediated via the BRCT domain. Interacts (via BRCT domain) with rad3. Interacts with rad4 (via BRCT1,2 domains); a single rad4 molecule interacts simultaneously with both Thr-187 phosphorylation sites in a crb2 dimer. Interacts (via Tudor domain) with histone H4K20me2. Interacts (via BRCT dmain) with histone H2AS128ph (gamma-H2A). Interacts with chk1. Interacts with sad1. Post-translationally, phosphorylation of Thr-73 and Ser-80 by rad3/ATM promotes interaction with chk1. Phosphorylation at Thr-187 is dependent on phosphorylation at Thr-215 and Thr-235. Phosphorylation at Thr-215 and Thr-235 may prime the non-canonical Thr-187 site for cdc2/CDK phosphorylation.

The protein localises to the nucleus. Its function is as follows. Essential for cell cycle arrest at the G1 and G2 stages following DNA damage by X-, and UV-irradiation, or inactivation of DNA ligase. Plays a role in the response to DNA damage. Interaction with rad4 via its phosphorylation sites in the N-terminus couples the DNA checkpoint apparatus to chromatin via interaction of its C-terminal BRCT domains with epigenetic modifications on histones H4 and H2A, respectively, in the G1/S phase of the cell cycle, and facilitates recruitment of the checkpoint kinase chk1. The chain is DNA repair protein crb2 from Schizosaccharomyces pombe (strain 972 / ATCC 24843) (Fission yeast).